We begin with the raw amino-acid sequence, 444 residues long: Zinc finger protein ZIC 1 (444 aa).

A C2H2-type 1 zinc finger spans residues 222–257 (LICKWIEPEQLANPKKSCNKTFSTMHELVTHVTVEH). The C2H2-type 2; degenerate zinc-finger motif lies at 271–293 (EECPREGKPFKAKYKLVNHIRVH). 3 C2H2-type zinc fingers span residues 299–323 (FPCP…KRTH), 329–353 (FKCE…MHVH), and 359–381 (YLCK…MKVH). Residues 372–432 (SSLRKHMKVH…SSAGHHTASH (61 aa)) form a disordered region. Positions 383-432 (SSSQGSQPSPAASSGYESSTPPTIVSPSTENQTASSLSPSSSAGHHTASH) are enriched in low complexity.

The protein belongs to the GLI C2H2-type zinc-finger protein family.

It is found in the nucleus. The protein localises to the cytoplasm. Its function is as follows. Acts as a transcriptional activator. Involved in neurogenesis. Plays important roles in the early stage of organogenesis of the CNS, as well as during dorsal spinal cord development and maturation of the cerebellum. Binds to the minimal GLI-consensus sequence 5'-TGGGTGGTC-3'. The sequence is that of Zinc finger protein ZIC 1 (ZIC1) from Gallus gallus (Chicken).